Consider the following 500-residue polypeptide: Polyamine oxidase 1 (500 aa).

The signal sequence occupies residues 1–28 (MSSSPSFGLLAVAALLLALSLAQHGSLA). FAD contacts are provided by residues 42–43 (MS), E63, R71, and 87–88 (NW). E90 contacts substrate. An N-linked (GlcNAc...) asparagine glycan is attached at N105. E198 is a binding site for substrate. FAD is bound by residues V265, Y427, and E458. Position 466 (G466) interacts with substrate. 467-468 (YV) is a binding site for FAD. A disulfide bridge links C485 with C491.

Belongs to the flavin monoamine oxidase family. As to quaternary structure, monomer. Requires FAD as cofactor.

It localises to the secreted. Its subcellular location is the extracellular space. The protein resides in the apoplast. It is found in the cell wall. It catalyses the reaction spermidine + O2 + H2O = 4-aminobutanal + propane-1,3-diamine + H2O2. The enzyme catalyses N(8)-acetylspermidine + O2 + H2O = 4-acetamidobutanal + propane-1,3-diamine + H2O2. It carries out the reaction spermine + O2 + H2O = N-(3-aminopropyl)-4-aminobutanal + propane-1,3-diamine + H2O2. The catalysed reaction is N(1)-acetylspermine + O2 + H2O = N-(3-acetamidopropyl)-4-aminobutanal + propane-1,3-diamine + H2O2. Its pathway is amine and polyamine degradation; spermine degradation. Flavoenzyme involved in polyamine back-conversion. Catalyzes the oxidation of the secondary amino group of polyamines, such as spermine, spermidine and their acetyl derivatives. Plays an important role in the regulation of polyamine intracellular concentration. The polypeptide is Polyamine oxidase 1 (Zea mays (Maize)).